We begin with the raw amino-acid sequence, 233 residues long: Large ribosomal subunit protein bL25 (233 aa).

Residues 1–23 (MATVRELKATARPKSGKGAARAE) form a disordered region.

This sequence belongs to the bacterial ribosomal protein bL25 family. CTC subfamily. Part of the 50S ribosomal subunit; part of the 5S rRNA/L5/L18/L25 subcomplex. Contacts the 5S rRNA. Binds to the 5S rRNA independently of L5 and L18.

Its function is as follows. This is one of the proteins that binds to the 5S RNA in the ribosome where it forms part of the central protuberance. In Nitrobacter hamburgensis (strain DSM 10229 / NCIMB 13809 / X14), this protein is Large ribosomal subunit protein bL25.